The chain runs to 382 residues: UDP-N-acetylglucosamine--N-acetylmuramyl-(pentapeptide) pyrophosphoryl-undecaprenol N-acetylglucosamine transferase (382 aa).

Residues T17–G19, N137, R179, S213, and Q308 contribute to the UDP-N-acetyl-alpha-D-glucosamine site.

The protein belongs to the glycosyltransferase 28 family. MurG subfamily.

It is found in the cell membrane. The catalysed reaction is di-trans,octa-cis-undecaprenyl diphospho-N-acetyl-alpha-D-muramoyl-L-alanyl-D-glutamyl-meso-2,6-diaminopimeloyl-D-alanyl-D-alanine + UDP-N-acetyl-alpha-D-glucosamine = di-trans,octa-cis-undecaprenyl diphospho-[N-acetyl-alpha-D-glucosaminyl-(1-&gt;4)]-N-acetyl-alpha-D-muramoyl-L-alanyl-D-glutamyl-meso-2,6-diaminopimeloyl-D-alanyl-D-alanine + UDP + H(+). Its pathway is cell wall biogenesis; peptidoglycan biosynthesis. Its function is as follows. Cell wall formation. Catalyzes the transfer of a GlcNAc subunit on undecaprenyl-pyrophosphoryl-MurNAc-pentapeptide (lipid intermediate I) to form undecaprenyl-pyrophosphoryl-MurNAc-(pentapeptide)GlcNAc (lipid intermediate II). This chain is UDP-N-acetylglucosamine--N-acetylmuramyl-(pentapeptide) pyrophosphoryl-undecaprenol N-acetylglucosamine transferase, found in Rhodococcus opacus (strain B4).